Here is a 461-residue protein sequence, read N- to C-terminus: tRNA-2-methylthio-N(6)-dimethylallyladenosine synthase (461 aa).

In terms of domain architecture, MTTase N-terminal spans 18-134 (KHIYIQTLGC…LPDFISRIEK (117 aa)). [4Fe-4S] cluster-binding residues include Cys-27, Cys-63, Cys-97, Cys-172, Cys-176, and Cys-179. A Radical SAM core domain is found at 158-388 (CNGQVSSFVT…QALQEQHTLE (231 aa)). The TRAM domain maps to 391–454 (KAMEGKQEDV…LHSLRGEMLC (64 aa)).

The protein belongs to the methylthiotransferase family. MiaB subfamily. Monomer. [4Fe-4S] cluster serves as cofactor.

It is found in the cytoplasm. It carries out the reaction N(6)-dimethylallyladenosine(37) in tRNA + (sulfur carrier)-SH + AH2 + 2 S-adenosyl-L-methionine = 2-methylsulfanyl-N(6)-dimethylallyladenosine(37) in tRNA + (sulfur carrier)-H + 5'-deoxyadenosine + L-methionine + A + S-adenosyl-L-homocysteine + 2 H(+). Functionally, catalyzes the methylthiolation of N6-(dimethylallyl)adenosine (i(6)A), leading to the formation of 2-methylthio-N6-(dimethylallyl)adenosine (ms(2)i(6)A) at position 37 in tRNAs that read codons beginning with uridine. This chain is tRNA-2-methylthio-N(6)-dimethylallyladenosine synthase, found in Syntrophus aciditrophicus (strain SB).